The primary structure comprises 144 residues: Putative pre-16S rRNA nuclease (144 aa).

The protein belongs to the YqgF nuclease family.

It is found in the cytoplasm. Could be a nuclease involved in processing of the 5'-end of pre-16S rRNA. The polypeptide is Putative pre-16S rRNA nuclease (Lacticaseibacillus casei (strain BL23) (Lactobacillus casei)).